Reading from the N-terminus, the 262-residue chain is Ribose-5-phosphate isomerase A (262 aa).

Residues 33-36, 89-92, and 102-105 each bind substrate; these read TGST, DGAD, and KGGG. The active-site Proton acceptor is E111. A substrate-binding site is contributed by K129.

The protein belongs to the ribose 5-phosphate isomerase family. In terms of assembly, homodimer.

It carries out the reaction aldehydo-D-ribose 5-phosphate = D-ribulose 5-phosphate. Its pathway is carbohydrate degradation; pentose phosphate pathway; D-ribose 5-phosphate from D-ribulose 5-phosphate (non-oxidative stage): step 1/1. In terms of biological role, catalyzes the reversible conversion of ribose-5-phosphate to ribulose 5-phosphate. The sequence is that of Ribose-5-phosphate isomerase A from Ruegeria pomeroyi (strain ATCC 700808 / DSM 15171 / DSS-3) (Silicibacter pomeroyi).